The primary structure comprises 94 residues: Small ribosomal subunit protein uS19 (94 aa).

It belongs to the universal ribosomal protein uS19 family.

Protein S19 forms a complex with S13 that binds strongly to the 16S ribosomal RNA. The polypeptide is Small ribosomal subunit protein uS19 (Wolbachia pipientis wMel).